The following is a 392-amino-acid chain: Large ribosomal subunit protein uL3 (392 aa).

This sequence belongs to the universal ribosomal protein uL3 family. In terms of assembly, component of the large ribosomal subunit (LSU). Mature N.crassa ribosomes consist of a small (40S) and a large (60S) subunit. The 40S small subunit contains 1 molecule of ribosomal RNA (18S rRNA) and at least 32 different proteins. The large 60S subunit contains 3 rRNA molecules (26S, 5.8S and 5S rRNA) and at least 42 different proteins.

The protein resides in the cytoplasm. Functionally, component of the ribosome, a large ribonucleoprotein complex responsible for the synthesis of proteins in the cell. The small ribosomal subunit (SSU) binds messenger RNAs (mRNAs) and translates the encoded message by selecting cognate aminoacyl-transfer RNA (tRNA) molecules. The large subunit (LSU) contains the ribosomal catalytic site termed the peptidyl transferase center (PTC), which catalyzes the formation of peptide bonds, thereby polymerizing the amino acids delivered by tRNAs into a polypeptide chain. The nascent polypeptides leave the ribosome through a tunnel in the LSU and interact with protein factors that function in enzymatic processing, targeting, and the membrane insertion of nascent chains at the exit of the ribosomal tunnel. This chain is Large ribosomal subunit protein uL3 (rpl-3), found in Neurospora crassa (strain ATCC 24698 / 74-OR23-1A / CBS 708.71 / DSM 1257 / FGSC 987).